Reading from the N-terminus, the 95-residue chain is Co-chaperonin GroES (95 aa).

It belongs to the GroES chaperonin family. In terms of assembly, heptamer of 7 subunits arranged in a ring. Interacts with the chaperonin GroEL.

The protein localises to the cytoplasm. Its function is as follows. Together with the chaperonin GroEL, plays an essential role in assisting protein folding. The GroEL-GroES system forms a nano-cage that allows encapsulation of the non-native substrate proteins and provides a physical environment optimized to promote and accelerate protein folding. GroES binds to the apical surface of the GroEL ring, thereby capping the opening of the GroEL channel. The polypeptide is Co-chaperonin GroES (Streptococcus uberis (strain ATCC BAA-854 / 0140J)).